The chain runs to 263 residues: MARSYAERANTHQSPVARRLFALMEQKQSNLCASVDVRTTKELLELLDKLGPFICLAKTHIDIIDDFTYDGTILPLLELSKKHKFLIFEDRKFADIGNTVKHQYQGGVYKIAQWADITNAHGVIGSGIVKGLKEAATETTDQPRGLLMLAELSSKGSIAHGKYTEETVEIAKSDKEFVIGFIAQNSMGGQDEGFDWIIMTPGVGLDDTGDALGQQYRTVSQVFSTGTDIIIVGRGLFGKGRDPLKEGERYRKAGWEAYQNILR.

Substrate contacts are provided by residues D36, 58–60 (KTH), 90–99 (DRKFADIGNT), Y216, and R234. K92 functions as the Proton donor in the catalytic mechanism.

Belongs to the OMP decarboxylase family.

The catalysed reaction is orotidine 5'-phosphate + H(+) = UMP + CO2. The protein operates within pyrimidine metabolism; UMP biosynthesis via de novo pathway; UMP from orotate: step 2/2. The polypeptide is Orotidine 5'-phosphate decarboxylase (URA3) (Komagataella pastoris (Yeast)).